Reading from the N-terminus, the 542-residue chain is Chaperonin GroEL 2 (542 aa).

ATP contacts are provided by residues 30–33 (TLGP), K51, 87–91 (DGTTT), G415, and D496.

Belongs to the chaperonin (HSP60) family. In terms of assembly, forms a cylinder of 14 subunits composed of two heptameric rings stacked back-to-back. Interacts with the co-chaperonin GroES.

The protein resides in the cytoplasm. It carries out the reaction ATP + H2O + a folded polypeptide = ADP + phosphate + an unfolded polypeptide.. In terms of biological role, together with its co-chaperonin GroES, plays an essential role in assisting protein folding. The GroEL-GroES system forms a nano-cage that allows encapsulation of the non-native substrate proteins and provides a physical environment optimized to promote and accelerate protein folding. This chain is Chaperonin GroEL 2, found in Azorhizobium caulinodans (strain ATCC 43989 / DSM 5975 / JCM 20966 / LMG 6465 / NBRC 14845 / NCIMB 13405 / ORS 571).